We begin with the raw amino-acid sequence, 176 residues long: Imidazoleglycerol-phosphate dehydratase (176 aa).

The protein belongs to the imidazoleglycerol-phosphate dehydratase family.

Its subcellular location is the cytoplasm. The enzyme catalyses D-erythro-1-(imidazol-4-yl)glycerol 3-phosphate = 3-(imidazol-4-yl)-2-oxopropyl phosphate + H2O. It participates in amino-acid biosynthesis; L-histidine biosynthesis; L-histidine from 5-phospho-alpha-D-ribose 1-diphosphate: step 6/9. The chain is Imidazoleglycerol-phosphate dehydratase from Pyrococcus furiosus (strain ATCC 43587 / DSM 3638 / JCM 8422 / Vc1).